Reading from the N-terminus, the 438-residue chain is Ribosomal protein uS12 methylthiotransferase RimO (438 aa).

Residues 4 to 114 form the MTTase N-terminal domain; sequence PRVSFVSLGC…VMNAVHEVAP (111 aa). Residues Cys13, Cys49, Cys78, Cys146, Cys150, and Cys153 each coordinate [4Fe-4S] cluster. A Radical SAM core domain is found at 132 to 370; it reads LTPRHYAYLK…MAKQQQISTN (239 aa). Positions 373–438 constitute a TRAM domain; it reads KKKVGKRLPV…DAYDLHGTAV (66 aa).

Belongs to the methylthiotransferase family. RimO subfamily. Requires [4Fe-4S] cluster as cofactor.

Its subcellular location is the cytoplasm. The enzyme catalyses L-aspartate(89)-[ribosomal protein uS12]-hydrogen + (sulfur carrier)-SH + AH2 + 2 S-adenosyl-L-methionine = 3-methylsulfanyl-L-aspartate(89)-[ribosomal protein uS12]-hydrogen + (sulfur carrier)-H + 5'-deoxyadenosine + L-methionine + A + S-adenosyl-L-homocysteine + 2 H(+). In terms of biological role, catalyzes the methylthiolation of an aspartic acid residue of ribosomal protein uS12. The sequence is that of Ribosomal protein uS12 methylthiotransferase RimO from Brucella ovis (strain ATCC 25840 / 63/290 / NCTC 10512).